A 134-amino-acid polypeptide reads, in one-letter code: Small ribosomal subunit protein uS11 (134 aa).

Residues 1 to 22 are disordered; the sequence is MAQKTRATAARKPRRKVNKNVT. Residues 9-18 show a composition bias toward basic residues; sequence AARKPRRKVN.

Belongs to the universal ribosomal protein uS11 family. As to quaternary structure, part of the 30S ribosomal subunit. Interacts with proteins S7 and S18. Binds to IF-3.

Functionally, located on the platform of the 30S subunit, it bridges several disparate RNA helices of the 16S rRNA. Forms part of the Shine-Dalgarno cleft in the 70S ribosome. This chain is Small ribosomal subunit protein uS11, found in Kocuria rhizophila (strain ATCC 9341 / DSM 348 / NBRC 103217 / DC2201).